The following is a 70-amino-acid chain: Disintegrin triflavin (70 aa).

Residues 1 to 70 (GEECDCGSPS…SADCPRWNGL (70 aa)) enclose the Disintegrin domain. 6 disulfides stabilise this stretch: Cys4/Cys19, Cys6/Cys14, Cys13/Cys36, Cys27/Cys33, Cys32/Cys57, and Cys45/Cys64. The Cell attachment site signature appears at 49 to 51 (RGD).

It belongs to the venom metalloproteinase (M12B) family. P-II subfamily. P-IIa sub-subfamily. As to quaternary structure, monomer. In terms of tissue distribution, expressed by the venom gland.

It localises to the secreted. Its function is as follows. Inhibits fibrinogen interaction with platelets. Acts by binding to alpha-IIb/beta-3 (ITGA2B/ITGB3) on the platelet surface and inhibits aggregation induced by ADP, thrombin, platelet-activating factor and collagen. This is Disintegrin triflavin from Protobothrops flavoviridis (Habu).